The chain runs to 631 residues: Bromodomain-containing protein 9 (631 aa).

2 disordered regions span residues 1–26 (MGKKHKKYRPEWRAVEGDYEDKPLEK) and 39–116 (VTEL…TLPK). Basic and acidic residues-rich tracts occupy residues 9-26 (RPEWRAVEGDYEDKPLEK) and 50-63 (SYYDDRSDHEWERH). Residues 64–73 (KEKKKKKKKK) show a composition bias toward basic residues. The span at 74-85 (SEKEKYADDDER) shows a compositional bias: basic and acidic residues. Over residues 86–96 (RRRKEEKKKKR) the composition is skewed to basic residues. Residues 166–270 (NEATPHQQLL…HTGFKMMSKQ (105 aa)) form the Bromo domain. The tract at residues 244-246 (VYN) is histone H4K5ac H4K8ac and histone H4K5bu H4K8bu binding. The disordered stretch occupies residues 571–631 (ASVDRVGSRP…SPEPGSTANS (61 aa)). The span at 581–590 (SSNLSSLSNA) shows a compositional bias: low complexity.

Binds acetylated histones H3 and H4. Binds butyrylated histone H4.

The protein resides in the nucleus. Plays a role in chromatin remodeling and regulation of transcription. Acts as a chromatin reader that recognizes and binds acylated histones: binds histones that are acetylated and/or butyrylated. The chain is Bromodomain-containing protein 9 (brd9) from Danio rerio (Zebrafish).